Consider the following 313-residue polypeptide: Homoserine O-acetyltransferase (313 aa).

Cysteine 142 acts as the Acyl-thioester intermediate in catalysis. Positions 163 and 191 each coordinate substrate. Residue histidine 234 is the Proton acceptor of the active site. Glutamate 236 is an active-site residue. Residue arginine 248 coordinates substrate.

This sequence belongs to the MetA family.

It localises to the cytoplasm. The enzyme catalyses L-homoserine + acetyl-CoA = O-acetyl-L-homoserine + CoA. It functions in the pathway amino-acid biosynthesis; L-methionine biosynthesis via de novo pathway; O-acetyl-L-homoserine from L-homoserine: step 1/1. Its function is as follows. Transfers an acetyl group from acetyl-CoA to L-homoserine, forming acetyl-L-homoserine. The chain is Homoserine O-acetyltransferase from Streptococcus sanguinis (strain SK36).